Here is a 227-residue protein sequence, read N- to C-terminus: Cytochrome c oxidase subunit 2 (227 aa).

The Mitochondrial intermembrane segment spans residues 1–14 (MAYPVQLGFQDAAS). Residues 15–45 (PIMEELLYFHDHTLMIMFLISSLVLYIISLM) traverse the membrane as a helical segment. The Mitochondrial matrix portion of the chain corresponds to 46-59 (LTTELMHTNTMDAQ). A helical membrane pass occupies residues 60-87 (EVETVWTILPAAILILIALPSLRILYMM). The Mitochondrial intermembrane portion of the chain corresponds to 88-227 (DEITTPSLTL…HFEEWLLSML (140 aa)). Cu cation is bound by residues His161, Cys196, Glu198, Cys200, His204, and Met207. Glu198 lines the Mg(2+) pocket.

It belongs to the cytochrome c oxidase subunit 2 family. In terms of assembly, component of the cytochrome c oxidase (complex IV, CIV), a multisubunit enzyme composed of 14 subunits. The complex is composed of a catalytic core of 3 subunits MT-CO1, MT-CO2 and MT-CO3, encoded in the mitochondrial DNA, and 11 supernumerary subunits COX4I, COX5A, COX5B, COX6A, COX6B, COX6C, COX7A, COX7B, COX7C, COX8 and NDUFA4, which are encoded in the nuclear genome. The complex exists as a monomer or a dimer and forms supercomplexes (SCs) in the inner mitochondrial membrane with NADH-ubiquinone oxidoreductase (complex I, CI) and ubiquinol-cytochrome c oxidoreductase (cytochrome b-c1 complex, complex III, CIII), resulting in different assemblies (supercomplex SCI(1)III(2)IV(1) and megacomplex MCI(2)III(2)IV(2)). Found in a complex with TMEM177, COA6, COX18, COX20, SCO1 and SCO2. Interacts with TMEM177 in a COX20-dependent manner. Interacts with COX20. Interacts with COX16. Cu cation is required as a cofactor.

The protein resides in the mitochondrion inner membrane. It carries out the reaction 4 Fe(II)-[cytochrome c] + O2 + 8 H(+)(in) = 4 Fe(III)-[cytochrome c] + 2 H2O + 4 H(+)(out). Component of the cytochrome c oxidase, the last enzyme in the mitochondrial electron transport chain which drives oxidative phosphorylation. The respiratory chain contains 3 multisubunit complexes succinate dehydrogenase (complex II, CII), ubiquinol-cytochrome c oxidoreductase (cytochrome b-c1 complex, complex III, CIII) and cytochrome c oxidase (complex IV, CIV), that cooperate to transfer electrons derived from NADH and succinate to molecular oxygen, creating an electrochemical gradient over the inner membrane that drives transmembrane transport and the ATP synthase. Cytochrome c oxidase is the component of the respiratory chain that catalyzes the reduction of oxygen to water. Electrons originating from reduced cytochrome c in the intermembrane space (IMS) are transferred via the dinuclear copper A center (CU(A)) of subunit 2 and heme A of subunit 1 to the active site in subunit 1, a binuclear center (BNC) formed by heme A3 and copper B (CU(B)). The BNC reduces molecular oxygen to 2 water molecules using 4 electrons from cytochrome c in the IMS and 4 protons from the mitochondrial matrix. In Lemur catta (Ring-tailed lemur), this protein is Cytochrome c oxidase subunit 2 (MT-CO2).